A 367-amino-acid chain; its full sequence is Mitochondrial distribution and morphology protein 34 (367 aa).

Positions 1 to 197 (MSFNFTWPEF…LPSIIHRLSQ (197 aa)) constitute an SMP-LTD domain. Disordered stretches follow at residues 267-311 (QGLK…ALSS) and 347-367 (PAHR…FHLS). Residues 286–302 (FHTTSRVRVPSSLESNA) are compositionally biased toward polar residues.

Belongs to the MDM34 family. As to quaternary structure, component of the ER-mitochondria encounter structure (ERMES) or MDM complex, composed of MMM1, MDM10, MDM12 and MDM34.

It is found in the mitochondrion outer membrane. Component of the ERMES/MDM complex, which serves as a molecular tether to connect the endoplasmic reticulum (ER) and mitochondria. Components of this complex are involved in the control of mitochondrial shape and protein biogenesis, and function in nonvesicular lipid trafficking between the ER and mitochondria. MDM34 is required for the interaction of the ER-resident membrane protein MMM1 and the outer mitochondrial membrane-resident beta-barrel protein MDM10. This Malassezia globosa (strain ATCC MYA-4612 / CBS 7966) (Dandruff-associated fungus) protein is Mitochondrial distribution and morphology protein 34.